Consider the following 424-residue polypeptide: Tyrosine--tRNA ligase (424 aa).

L-tyrosine is bound at residue Tyr-37. A 'HIGH' region motif is present at residues 42–51 (PTADSLHLGH). Positions 175 and 179 each coordinate L-tyrosine. The 'KMSKS' region signature appears at 235–239 (KFGKT). Residue Lys-238 coordinates ATP. One can recognise an S4 RNA-binding domain in the interval 357–414 (ADLQQALVAAELVPSRGQARTLISSNAVSVNGEKQASIDYVFDDADRLYSRYTLLRRG).

The protein belongs to the class-I aminoacyl-tRNA synthetase family. TyrS type 1 subfamily. In terms of assembly, homodimer.

Its subcellular location is the cytoplasm. The catalysed reaction is tRNA(Tyr) + L-tyrosine + ATP = L-tyrosyl-tRNA(Tyr) + AMP + diphosphate + H(+). In terms of biological role, catalyzes the attachment of tyrosine to tRNA(Tyr) in a two-step reaction: tyrosine is first activated by ATP to form Tyr-AMP and then transferred to the acceptor end of tRNA(Tyr). This chain is Tyrosine--tRNA ligase, found in Sodalis glossinidius (strain morsitans).